The chain runs to 1186 residues: Major DNA-binding protein (1186 aa).

The segment at 495–508 (CCLCSLDNRHSCAH) is a zinc-finger region. The short motif at 839–840 (FW) is the Required for filament formation element. Residues 1160-1186 (RRRPLACSDLFGDAPAEKRNDLTLDML) are required for nuclear localization.

Belongs to the herpesviridae major DNA-binding protein family. As to quaternary structure, homooligomers. Forms double-helical filaments necessary for the formation of replication compartments within the host nucleus. Interacts with the origin-binding protein. Interacts with the helicase primase complex; this interaction stimulates primer synthesis activity of the helicase-primase complex. Interacts with the DNA polymerase. Interacts with the alkaline exonuclease; this interaction increases its nuclease processivity.

Its subcellular location is the host nucleus. In terms of biological role, plays several crucial roles in viral infection. Participates in the opening of the viral DNA origin to initiate replication by interacting with the origin-binding protein. May disrupt loops, hairpins and other secondary structures present on ssDNA to reduce and eliminate pausing of viral DNA polymerase at specific sites during elongation. Promotes viral DNA recombination by performing strand-transfer, characterized by the ability to transfer a DNA strand from a linear duplex to a complementary single-stranded DNA circle. Can also catalyze the renaturation of complementary single strands. Additionally, reorganizes the host cell nucleus, leading to the formation of prereplicative sites and replication compartments. This process is driven by the protein which can form double-helical filaments in the absence of DNA. In Bovine herpesvirus 2 (strain BMV) (BoHV-2), this protein is Major DNA-binding protein.